Consider the following 292-residue polypeptide: MPWLQVRLAISPEQAETYEDAFLEVGAVSVTFMDAEDQPIFEPELNTTPLWAHTHLLALFEGGTEAAPLLAHLELLTGSPLPEHHSEVIEDQDWERSWMDGFQPMRFGQRLWIVPSWHAAPEPDAVNLLLDPGLAFGTGTHPTTALCLEWLDGQDLKDCNVLDFGCGSGILAIAALLLGAKEAVGTDIDVQALEASRDNAGRNNIADELFPLYLPEELPQVKADVLVANILAGPLVSLAPQLSGLVKSGGRLALSGILAEQGDEVAAAYAQDFDLDPIANRDGWVRITGRRR.

Residues Thr-144, Gly-165, Asp-187, and Asn-229 each coordinate S-adenosyl-L-methionine.

Belongs to the methyltransferase superfamily. PrmA family.

The protein resides in the cytoplasm. The catalysed reaction is L-lysyl-[protein] + 3 S-adenosyl-L-methionine = N(6),N(6),N(6)-trimethyl-L-lysyl-[protein] + 3 S-adenosyl-L-homocysteine + 3 H(+). Its function is as follows. Methylates ribosomal protein L11. This Pseudomonas fluorescens (strain Pf0-1) protein is Ribosomal protein L11 methyltransferase.